A 108-amino-acid chain; its full sequence is Insulin (108 aa).

The N-terminal stretch at Met-1–Ala-21 is a signal peptide. Intrachain disulfides connect Cys-30-Cys-94, Cys-42-Cys-107, and Cys-93-Cys-98. Positions Asp-54–Arg-85 are cleaved as a propeptide — c peptide.

Belongs to the insulin family. As to quaternary structure, heterodimer of a B chain and an A chain linked by two disulfide bonds.

It localises to the secreted. Functionally, insulin decreases blood glucose concentration. It increases cell permeability to monosaccharides, amino acids and fatty acids. It accelerates glycolysis, the pentose phosphate cycle, and glycogen synthesis in liver. This is Insulin (ins) from Cyprinus carpio (Common carp).